We begin with the raw amino-acid sequence, 946 residues long: MTLVLFATEYDSAHIVANVLSQTPTDHCVFPLLVKHQVSRRVYFCLQTQKCSDSRRVAPVFAVNNETLQLSRYLAARQPIPLSALIASLDEAETRPLYRHLFRTPVLSPEHGGEVREFKHLVYFHHAAVLRHLNQVFLCPTSPSWFISVFGHTEGQVLLTMAYYLFEGQYSTISTVEEYVRSFCTRDLGTIIPTHASMGEFARLLLGSPFRQRVSAFVAYAVARNRRDYTELEQVDTQINAFRERARLPDTVCVHYVYLAYRTALARARLLEYRRVVAYDADAAPEAQCTREPGFLGRRLSTELLDVMQKYFSLDNFLHDYVETHLLRLDESPHSATSPHGLGLAGYGGRIDGTHLAGFFGTSTQLARQLERINTLSESVFSPLERSLSGLLRLCASLRTAQTYTTGTLTRYSQRRYLLPEPALAPLLERPLPVYRVHLPNDQHVFCAVASETWHRSLFPRDLLRHVPDSRFSDEALTETVWLHDDDVASTSPETQFYYTRHEVFNERLPVFNFVADFDLRLRDGVSGLARHTVFELCRGLRRVWMTVWASLFGYTHPDRHPVYFFKSACPPNSVPVDAAGAPFDDDDYLDYRDERDTEEDEDGKEDKNNVPGNGVFQKTTSSVDTSPPYCRCKGKLGLRIITPFPACTIAVHPSVLRAVAQVLNHAVCLDAELHTLLDPISHPESSLDTGIYHHGRSVRLPYMYKMDQDDGYFMHRRLLPLFIVPDAYREHPLGFVRAQLDLRNLLHHHPPHDLPALPLSPPPRVILSVRDKICPSTEANFIETRSLNVTRYRRRGLTEVLAYHLYGGDGATAAAISDTDLQRLVVTRVWPPLLEHLTQHYEPHVSEQFTAPHVLLFQPHGACCVAVKRRDGARTRDFRCLNYTHRNPQETVQVFIDLRTEHSYALWASLWSRCFTKKCHSNAKNVHISIKIRPPDAPMPPATAV.

Residues 596 to 626 (RDTEEDEDGKEDKNNVPGNGVFQKTTSSVDT) are disordered. Residues 617 to 626 (FQKTTSSVDT) show a composition bias toward polar residues. The CHC2-type zinc finger occupies 881-920 (CLNYTHRNPQETVQVFIDLRTEHSYALWASLWSRCFTKKC).

The protein belongs to the herpesviridae DNA primase family. Associates with the helicase and the primase-associated factor to form the helicase-primase factor.

It is found in the host nucleus. Its function is as follows. Essential component of the helicase/primase complex. Unwinds the DNA at the replication forks and generates single-stranded DNA for both leading and lagging strand synthesis. The primase initiates primer synthesis and thereby produces large amount of short RNA primers on the lagging strand that the polymerase elongates using dNTPs. The chain is DNA primase (UL70) from Human cytomegalovirus (strain Merlin) (HHV-5).